Here is a 217-residue protein sequence, read N- to C-terminus: Pyridoxine/pyridoxamine 5'-phosphate oxidase (217 aa).

FMN contacts are provided by residues 66–71 (RMVLLK), 81–82 (FT), Arg-87, Lys-88, and Gln-110. Lys-71 provides a ligand contact to substrate. Positions 128, 132, and 136 each coordinate substrate. FMN contacts are provided by residues 145–146 (QS) and Trp-190. 196-198 (RLH) provides a ligand contact to substrate. Arg-200 is an FMN binding site.

It belongs to the pyridoxamine 5'-phosphate oxidase family. As to quaternary structure, homodimer. FMN is required as a cofactor.

It catalyses the reaction pyridoxamine 5'-phosphate + O2 + H2O = pyridoxal 5'-phosphate + H2O2 + NH4(+). The enzyme catalyses pyridoxine 5'-phosphate + O2 = pyridoxal 5'-phosphate + H2O2. It functions in the pathway cofactor metabolism; pyridoxal 5'-phosphate salvage; pyridoxal 5'-phosphate from pyridoxamine 5'-phosphate: step 1/1. The protein operates within cofactor metabolism; pyridoxal 5'-phosphate salvage; pyridoxal 5'-phosphate from pyridoxine 5'-phosphate: step 1/1. Functionally, catalyzes the oxidation of either pyridoxine 5'-phosphate (PNP) or pyridoxamine 5'-phosphate (PMP) into pyridoxal 5'-phosphate (PLP). This chain is Pyridoxine/pyridoxamine 5'-phosphate oxidase, found in Psychromonas ingrahamii (strain DSM 17664 / CCUG 51855 / 37).